Reading from the N-terminus, the 135-residue chain is uncharacterized protein (135 aa).

This is an uncharacterized protein from Rickettsia prowazekii (strain Madrid E).